A 373-amino-acid chain; its full sequence is uncharacterized protein (373 aa).

Belongs to the glycosyltransferase 28 family.

This is an uncharacterized protein from Bacillus subtilis (strain 168).